Here is a 238-residue protein sequence, read N- to C-terminus: ATP synthase subunit a (238 aa).

5 helical membrane-spanning segments follow: residues 18-38, 75-95, 112-132, 179-199, and 203-223; these read LTIL…VFWA, YSLL…LGLM, NFGV…IEGI, VVTG…PLAF, and IVWT…FIIL.

It belongs to the ATPase A chain family. In terms of assembly, F-type ATPases have 2 components, CF(1) - the catalytic core - and CF(0) - the membrane proton channel. CF(1) has five subunits: alpha(3), beta(3), gamma(1), delta(1), epsilon(1). CF(0) has three main subunits: a(1), b(2) and c(9-12). The alpha and beta chains form an alternating ring which encloses part of the gamma chain. CF(1) is attached to CF(0) by a central stalk formed by the gamma and epsilon chains, while a peripheral stalk is formed by the delta and b chains.

The protein resides in the cell membrane. Key component of the proton channel; it plays a direct role in the translocation of protons across the membrane. In Streptococcus agalactiae serotype III (strain NEM316), this protein is ATP synthase subunit a.